The sequence spans 92 residues: YcgL domain-containing protein Shewana3_2381 (92 aa).

Positions 1–85 (MLCAVYKSSR…PQVNLLAEHR (85 aa)) constitute a YcgL domain.

In Shewanella sp. (strain ANA-3), this protein is YcgL domain-containing protein Shewana3_2381.